Consider the following 300-residue polypeptide: tRNA dimethylallyltransferase (300 aa).

Position 11 to 18 (11 to 18) interacts with ATP; the sequence is GPTAVGKS. 13-18 serves as a coordination point for substrate; sequence TAVGKS. Residues 35 to 38 form an interaction with substrate tRNA region; sequence DSIQ.

This sequence belongs to the IPP transferase family. As to quaternary structure, monomer. Requires Mg(2+) as cofactor.

The enzyme catalyses adenosine(37) in tRNA + dimethylallyl diphosphate = N(6)-dimethylallyladenosine(37) in tRNA + diphosphate. Its function is as follows. Catalyzes the transfer of a dimethylallyl group onto the adenine at position 37 in tRNAs that read codons beginning with uridine, leading to the formation of N6-(dimethylallyl)adenosine (i(6)A). The chain is tRNA dimethylallyltransferase from Borreliella afzelii (strain PKo) (Borrelia afzelii).